Reading from the N-terminus, the 98-residue chain is 10 kDa chaperonin (98 aa).

It belongs to the GroES chaperonin family. In terms of assembly, forms stable complexes with CPN60 in the presence of ATP.

Its subcellular location is the cytoplasm. Its function is as follows. Seems to function only as a co-chaperone, along with cpn60, and in certain cases is essential for the discharge of biologically active proteins from cpn60. In Brassica napus (Rape), this protein is 10 kDa chaperonin.